The primary structure comprises 218 residues: Leucine-rich repeat protein 1 (218 aa).

An N-terminal signal peptide occupies residues 1–27 (MASRNYRWELFAASLTLTLALIHLVEA). LRR repeat units lie at residues 94–117 (EHLQ…LGNL), 119–140 (NLIS…SLGK), 141–165 (LKSL…LTAI), and 167–190 (SLKV…PFAH).

As to quaternary structure, interacts with HIR1.

Its function is as follows. Involved in plant defense response. This chain is Leucine-rich repeat protein 1, found in Arabidopsis thaliana (Mouse-ear cress).